The primary structure comprises 205 residues: Recombination protein RecR (205 aa).

A C4-type zinc finger spans residues 60–75; that stretch reads CKVCHNISDTETCQIC. The Toprim domain occupies 83–178; that stretch reads SMVCVVENIR…KLSVLARGVS (96 aa).

This sequence belongs to the RecR family.

Its function is as follows. May play a role in DNA repair. It seems to be involved in an RecBC-independent recombinational process of DNA repair. It may act with RecF and RecO. The sequence is that of Recombination protein RecR from Bacteroides fragilis (strain ATCC 25285 / DSM 2151 / CCUG 4856 / JCM 11019 / LMG 10263 / NCTC 9343 / Onslow / VPI 2553 / EN-2).